The sequence spans 338 residues: dTDP-glucose 4,6-dehydratase (338 aa).

NAD(+) is bound by residues 12–13 (FI), 33–36 (DKLT), 59–60 (DI), 81–85 (LAAES), and T100. A substrate-binding site is contributed by S85. T134 provides a ligand contact to substrate. D135 functions as the Proton donor in the catalytic mechanism. Catalysis depends on proton acceptor residues E136 and Y160. 160–164 (YSASK) lines the NAD(+) pocket. N189 serves as a coordination point for substrate. Position 190 (N190) interacts with NAD(+). Residues 199–200 (KL), 215–217 (PIY), R224, N259, and 293–297 (DRPGH) contribute to the substrate site.

The protein belongs to the NAD(P)-dependent epimerase/dehydratase family. dTDP-glucose dehydratase subfamily. In terms of assembly, homodimer. NAD(+) is required as a cofactor.

It catalyses the reaction dTDP-alpha-D-glucose = dTDP-4-dehydro-6-deoxy-alpha-D-glucose + H2O. It functions in the pathway carbohydrate biosynthesis; dTDP-L-rhamnose biosynthesis. Its pathway is bacterial outer membrane biogenesis; LPS O-antigen biosynthesis. Functionally, catalyzes the dehydration of dTDP-D-glucose to form dTDP-6-deoxy-D-xylo-4-hexulose via a three-step process involving oxidation, dehydration and reduction. This chain is dTDP-glucose 4,6-dehydratase (rffG), found in Haemophilus influenzae (strain ATCC 51907 / DSM 11121 / KW20 / Rd).